The chain runs to 197 residues: GTP cyclohydrolase 1 (197 aa).

Zn(2+)-binding residues include Cys-88, His-91, and Cys-160.

The protein belongs to the GTP cyclohydrolase I family. As to quaternary structure, homomer.

The enzyme catalyses GTP + H2O = 7,8-dihydroneopterin 3'-triphosphate + formate + H(+). It functions in the pathway cofactor biosynthesis; 7,8-dihydroneopterin triphosphate biosynthesis; 7,8-dihydroneopterin triphosphate from GTP: step 1/1. The protein is GTP cyclohydrolase 1 of Clostridium beijerinckii (strain ATCC 51743 / NCIMB 8052) (Clostridium acetobutylicum).